We begin with the raw amino-acid sequence, 423 residues long: Salicylate 5-hydroxylase, large oxygenase component (423 aa).

The segment at 1-20 (MSEPQRLKPVFPQDPKWPGE) is disordered. Residues 49–168 (WCYVGLEAEI…VAARGGAVFA (120 aa)) form the Rieske domain. [2Fe-2S] cluster contacts are provided by Cys-91, His-93, Cys-111, and His-114. Fe cation-binding residues include His-224, His-229, and Asp-370.

The protein belongs to the bacterial ring-hydroxylating dioxygenase alpha subunit family. In terms of assembly, the salicylate 5-hydroxylase (S5H) multicomponent enzyme system is composed of an electron transfer component and an oxygenase component. The electron transfer component is comprised of a ferredoxin reductase (NagAa) and a ferredoxin (NagAb), and the oxygenase component is formed by a large subunit (NagG) and a small subunit (NagH). Fe cation is required as a cofactor. It depends on [2Fe-2S] cluster as a cofactor.

It catalyses the reaction salicylate + NADH + O2 + H(+) = 2,5-dihydroxybenzoate + NAD(+) + H2O. The protein operates within aromatic compound metabolism; naphthalene degradation. Its function is as follows. Oxygenase component of the salicylate 5-hydroxylase (S5H) multicomponent enzyme system which catalyzes the 5-hydroxylation of salicylate to gentisate. Active only on substrates with a ring-substituted carboxylate group with an adjacent hydroxyl group. Primarily active against salicylate and substituted salicylates, but not against 2-hydroxycinnamate, 3-hydroxycinnamate, 2-hydroxyphenylacetate, 3-hydroxyphenylacetate, 2-hydroxybenzophenone, 1-hydroxy-2-naphthoate, 4-methoxysalicylate or 2-hydroxyacetophenone. This chain is Salicylate 5-hydroxylase, large oxygenase component, found in Ralstonia sp.